Reading from the N-terminus, the 277-residue chain is S-formylglutathione hydrolase FrmB (277 aa).

Catalysis depends on charge relay system residues S145, D221, and H254.

It belongs to the esterase D family.

The catalysed reaction is S-formylglutathione + H2O = formate + glutathione + H(+). Serine hydrolase involved in the detoxification of formaldehyde. Hydrolyzes S-formylglutathione to glutathione and formate. This chain is S-formylglutathione hydrolase FrmB (frmB), found in Escherichia coli O1:K1 / APEC.